The following is a 146-amino-acid chain: Peptide methionine sulfoxide reductase MsrB (146 aa).

The MsrB domain occupies 2 to 125 (LKKNKDELND…NSAAVQFIPY (124 aa)). Cys114 functions as the Nucleophile in the catalytic mechanism.

This sequence belongs to the MsrB Met sulfoxide reductase family.

It catalyses the reaction L-methionyl-[protein] + [thioredoxin]-disulfide + H2O = L-methionyl-(R)-S-oxide-[protein] + [thioredoxin]-dithiol. This Staphylococcus carnosus (strain TM300) protein is Peptide methionine sulfoxide reductase MsrB.